A 201-amino-acid polypeptide reads, in one-letter code: Large ribosomal subunit protein uL4 (201 aa).

A disordered region spans residues 45–75 (AQKSRSEVSGSGKKPWRQKGTGRARSGSLRS).

The protein belongs to the universal ribosomal protein uL4 family. Part of the 50S ribosomal subunit.

In terms of biological role, one of the primary rRNA binding proteins, this protein initially binds near the 5'-end of the 23S rRNA. It is important during the early stages of 50S assembly. It makes multiple contacts with different domains of the 23S rRNA in the assembled 50S subunit and ribosome. Functionally, forms part of the polypeptide exit tunnel. The polypeptide is Large ribosomal subunit protein uL4 (Buchnera aphidicola subsp. Cinara cedri (strain Cc)).